Consider the following 138-residue polypeptide: Translation initiation factor 5A (138 aa).

Lysine 42 is subject to Hypusine.

Belongs to the eIF-5A family.

The protein localises to the cytoplasm. In terms of biological role, functions by promoting the formation of the first peptide bond. In Pyrobaculum aerophilum (strain ATCC 51768 / DSM 7523 / JCM 9630 / CIP 104966 / NBRC 100827 / IM2), this protein is Translation initiation factor 5A (eif5a).